Reading from the N-terminus, the 396-residue chain is DNA polymerase processivity factor (396 aa).

Residues 306–396 form a disordered region; the sequence is AEGGESSQKV…VPKTTFNPLI (91 aa). Residues 376-386 show a composition bias toward basic and acidic residues; the sequence is SDSSQSRDRGK.

Belongs to the herpesviridae DNA polymerase accessory subunit family. Homooligomerizes and adopts an oligomeric ring-shaped structure composed of 6 subunits. Forms a complex with the DNA-binding protein, the DNA polymerase subunit, and the alkaline exonuclease.

The protein localises to the virion tegument. It is found in the host nucleus. Its function is as follows. Plays an essential role in the viral lytic DNA replication by acting as the polymerase accessory subunit. Stimulates the viral DNA polymerase activity and appears to function with it as a holoenzyme. Increases the processivity of the viral polymerase, probably by acting as a sliding clamp that prevents dissociation of the polymerase from the active template. This is DNA polymerase processivity factor (ORF59) from Homo sapiens (Human).